Here is a 231-residue protein sequence, read N- to C-terminus: ATP-dependent dethiobiotin synthetase BioD (231 aa).

Position 12 to 17 (12 to 17) interacts with ATP; sequence DVGKTV. Mg(2+) is bound at residue threonine 16. Lysine 37 is an active-site residue. Position 41 (threonine 41) interacts with substrate. Residues aspartate 50, 109-112, 170-171, and 200-202 each bind ATP; these read EGAG, GS, and PAG. The Mg(2+) site is built by aspartate 50 and glutamate 109.

Belongs to the dethiobiotin synthetase family. Homodimer. Mg(2+) is required as a cofactor.

The protein resides in the cytoplasm. The catalysed reaction is (7R,8S)-7,8-diammoniononanoate + CO2 + ATP = (4R,5S)-dethiobiotin + ADP + phosphate + 3 H(+). It participates in cofactor biosynthesis; biotin biosynthesis; biotin from 7,8-diaminononanoate: step 1/2. Its function is as follows. Catalyzes a mechanistically unusual reaction, the ATP-dependent insertion of CO2 between the N7 and N8 nitrogen atoms of 7,8-diaminopelargonic acid (DAPA, also called 7,8-diammoniononanoate) to form a ureido ring. The protein is ATP-dependent dethiobiotin synthetase BioD of Rhodococcus jostii (strain RHA1).